Consider the following 327-residue polypeptide: DNA-directed RNA polymerase subunit alpha (327 aa).

The tract at residues 1–231 is alpha N-terminal domain (alpha-NTD); that stretch reads MIYQMQMPAK…DHIMYFANFS (231 aa). An alpha C-terminal domain (alpha-CTD) region spans residues 247–327; sequence DEFESMRKLL…GMDITRYQMK (81 aa).

It belongs to the RNA polymerase alpha chain family. As to quaternary structure, homodimer. The RNAP catalytic core consists of 2 alpha, 1 beta, 1 beta' and 1 omega subunit. When a sigma factor is associated with the core the holoenzyme is formed, which can initiate transcription.

The catalysed reaction is RNA(n) + a ribonucleoside 5'-triphosphate = RNA(n+1) + diphosphate. DNA-dependent RNA polymerase catalyzes the transcription of DNA into RNA using the four ribonucleoside triphosphates as substrates. The sequence is that of DNA-directed RNA polymerase subunit alpha from Chlorobium phaeobacteroides (strain DSM 266 / SMG 266 / 2430).